A 218-amino-acid polypeptide reads, in one-letter code: Thiopurine S-methyltransferase (218 aa).

S-adenosyl-L-methionine is bound by residues W10, L45, E66, and R123.

Belongs to the class I-like SAM-binding methyltransferase superfamily. TPMT family.

Its subcellular location is the cytoplasm. It catalyses the reaction S-adenosyl-L-methionine + a thiopurine = S-adenosyl-L-homocysteine + a thiopurine S-methylether.. The chain is Thiopurine S-methyltransferase from Shewanella sp. (strain W3-18-1).